Reading from the N-terminus, the 267-residue chain is Translation initiation factor 2 subunit alpha (267 aa).

The region spanning 17–88 is the S1 motif domain; it reads GEIVIGTVKR…KRGHIDLSIK (72 aa).

This sequence belongs to the eIF-2-alpha family. As to quaternary structure, heterotrimer composed of an alpha, a beta and a gamma chain.

Functionally, eIF-2 functions in the early steps of protein synthesis by forming a ternary complex with GTP and initiator tRNA. The protein is Translation initiation factor 2 subunit alpha (eif2a) of Archaeoglobus fulgidus (strain ATCC 49558 / DSM 4304 / JCM 9628 / NBRC 100126 / VC-16).